The primary structure comprises 634 residues: tRNA uridine 5-carboxymethylaminomethyl modification enzyme MnmG (634 aa).

An FAD-binding site is contributed by 14-19; that stretch reads GGGHAG. Position 279–293 (279–293) interacts with NAD(+); that stretch reads GPRYCPSIEDKVVRF.

This sequence belongs to the MnmG family. As to quaternary structure, homodimer. Heterotetramer of two MnmE and two MnmG subunits. FAD serves as cofactor.

The protein resides in the cytoplasm. NAD-binding protein involved in the addition of a carboxymethylaminomethyl (cmnm) group at the wobble position (U34) of certain tRNAs, forming tRNA-cmnm(5)s(2)U34. The chain is tRNA uridine 5-carboxymethylaminomethyl modification enzyme MnmG from Xanthomonas oryzae pv. oryzae (strain KACC10331 / KXO85).